The chain runs to 109 residues: UPF0122 protein BH2485 (109 aa).

It belongs to the UPF0122 family.

Its function is as follows. Might take part in the signal recognition particle (SRP) pathway. This is inferred from the conservation of its genetic proximity to ftsY/ffh. May be a regulatory protein. In Halalkalibacterium halodurans (strain ATCC BAA-125 / DSM 18197 / FERM 7344 / JCM 9153 / C-125) (Bacillus halodurans), this protein is UPF0122 protein BH2485.